We begin with the raw amino-acid sequence, 332 residues long: Sphingolipid delta(4)-desaturase DES1-like (332 aa).

3 helical membrane passes run 55 to 75 (PWAF…AAIL), 83 to 103 (ILSI…LAIH), and 119 to 139 (CLGI…FQKY). The Histidine box-1 motif lies at 103–107 (HELSH). Positions 140–144 (HLEHH) match the Histidine box-2 motif. 3 consecutive transmembrane segments (helical) span residues 164 to 184 (LVTN…FYAL), 197 to 217 (WEFI…LFFG), and 222 to 242 (AYLI…GHFI). Residues 271–275 (HNEHH) carry the Histidine box-3 motif.

Belongs to the fatty acid desaturase type 1 family. DEGS subfamily. Specifically expressed in flowers.

The protein resides in the endoplasmic reticulum membrane. It carries out the reaction an N-acylsphinganine + 2 Fe(II)-[cytochrome b5] + O2 + 2 H(+) = an N-acylsphing-4-enine + 2 Fe(III)-[cytochrome b5] + 2 H2O. In terms of biological role, sphingolipid-delta-4-desaturase required for the biosynthesis of delta-4-unsaturated sphingolipids and derivatives. May be required for the biosynthesis of glucosylceramides. This chain is Sphingolipid delta(4)-desaturase DES1-like, found in Arabidopsis thaliana (Mouse-ear cress).